Here is a 400-residue protein sequence, read N- to C-terminus: Enolase (400 aa).

Residue Gln153 participates in (2R)-2-phosphoglycerate binding. The Proton donor role is filled by Glu195. The Mg(2+) site is built by Asp231, Glu274, and Asp301. (2R)-2-phosphoglycerate-binding residues include Lys326, Arg355, Ser356, and Lys377. The active-site Proton acceptor is Lys326.

The protein belongs to the enolase family. Mg(2+) serves as cofactor.

The protein localises to the cytoplasm. It is found in the secreted. The protein resides in the cell surface. It carries out the reaction (2R)-2-phosphoglycerate = phosphoenolpyruvate + H2O. It participates in carbohydrate degradation; glycolysis; pyruvate from D-glyceraldehyde 3-phosphate: step 4/5. In terms of biological role, catalyzes the reversible conversion of 2-phosphoglycerate (2-PG) into phosphoenolpyruvate (PEP). It is essential for the degradation of carbohydrates via glycolysis. The protein is Enolase of Halorubrum lacusprofundi (strain ATCC 49239 / DSM 5036 / JCM 8891 / ACAM 34).